The sequence spans 654 residues: Tetratricopeptide repeat protein 30 homolog (654 aa).

7 TPR repeats span residues 10–43 (DGEYTKTIYTMIKEERFQDAINTLNTIPESSTTR), 44–76 (AGLSLLGHCYYQTQDFIEAANCYEHLLNLVPDV), 145–178 (ASTKNDEGCLLYQANMYEDALQRYVSALQAGGFN), 180–212 (HVAYNAALCHYRRKENSQALNYIAEIVERGIRN), 393–426 (CRSATDQNALRMALREYEGALESYLPVAMARAWI), 452–485 (SWRLHAAHVLFMRGDRYKEAAAFYEPIVRQNYDD), and 535–568 (CIVNLVIGTLYCAKNNYEFGLSRIAHALDGGSGA).

The protein belongs to the TTC30/dfy-1/fleer family.

It is found in the cell projection. The protein resides in the cilium. Its function is as follows. Required for polyglutamylation of axonemal tubulin in sensory cilia. Plays a role in anterograde intraflagellar transport (IFT), the process by which cilia precursors are transported from the base of the cilium to the site of their incorporation at the tip. The protein is Tetratricopeptide repeat protein 30 homolog of Anopheles gambiae (African malaria mosquito).